A 328-amino-acid polypeptide reads, in one-letter code: MLSLFNIALKTLKNHIEFLKHDKDILTHLGLCCKNYDLIHKCSECGNICPNRQQHGTCININYLLIYAVKCDNYMLAYRLLCWGANEKFAHYFRRPLPNLKPLLPKKELTPKDIKQLAYEHFYSDSELITVFEVFRRCRNINDCLEFFYKKNLEFEIYFARLHVYSKTFYRKSWYWFCIFMAVKHGMKQALKKITKTYIPTFYNKTTLNLVLFLSACFYENVEWMKYFFYKANKKIQQRMLSYGMEWAATHGKVRTFVCCYTLGGTASLKMYQKAYQNERYMIMALCSYLGNIQINNPWDNLNPYMMMQNKEKFLPLKFSEETQYFYI.

It belongs to the asfivirus MGF 300 family.

The sequence is that of Protein MGF 300-4L from Ornithodoros (relapsing fever ticks).